The chain runs to 301 residues: Lycopene elongase/hydratase (301 aa).

The disordered stretch occupies residues 1 to 20 (MSADMAAQSESGEGGDDGRA). Transmembrane regions (helical) follow at residues 39–59 (FWLYLAGPVVVGVAAAASALA), 61–81 (LFGLEPVALFAYFLVPANVFL), 110–130 (PVNTVVVAASGLLGVGLFAVA), 133–153 (VAWPWLAAHFFLAVEYSAPPF), 160–180 (LLDSVSNGLYVLPGVAAYAAV), 186–206 (PMLAVAGAWLWTMGMHTFSAI), 229–249 (TYWYCAATWVLAAVAFAAVDL), 252–272 (GALLAAYPVVVLGIVAAGVDV), and 276–296 (YWWYPVINTVVGMLITLGALW).

This sequence belongs to the UbiA prenyltransferase family.

Its subcellular location is the cell membrane. It catalyses the reaction all-trans-lycopene + dimethylallyl diphosphate + H2O = dihydroisopentenyldehydrorhodopin + diphosphate. The enzyme catalyses isopentenyldehydrorhodopin + dimethylallyl diphosphate + H2O = dihydrobisanhydrobacterioruberin + diphosphate. It functions in the pathway carotenoid biosynthesis. Involved in the biosynthesis of the acyclic C50 carotenoid bacterioruberin (BR). Acts as a bifunctional elongase/hydratase that catalyzes the elongation of lycopene by attaching a C(5) isoprene unit at C-2, as well as the hydroxylation of the previous end of the molecule. The enzyme acts at both ends of the substrate, and catalyzes the conversion of lycopene to the C(45) intermediate dihydroisopentenyldehydrorhodopin (DH-IDR) and the conversion of isopentenyldehydrorhodopin (IDR) to the C(50) carotenoid dihydrobisanhydrobacterioruberin (DH-BABR). Can also catalyze the conversion of lycopene to tetrahydrobisanhydrobacterioruberin (TH-BABR). The sequence is that of Lycopene elongase/hydratase from Haloferax volcanii (strain ATCC 29605 / DSM 3757 / JCM 8879 / NBRC 14742 / NCIMB 2012 / VKM B-1768 / DS2) (Halobacterium volcanii).